A 355-amino-acid polypeptide reads, in one-letter code: Uroporphyrinogen decarboxylase (355 aa).

Substrate-binding positions include Arg-27–Arg-31, Asp-77, Tyr-154, Thr-209, and His-327.

Belongs to the uroporphyrinogen decarboxylase family. In terms of assembly, homodimer.

The protein localises to the cytoplasm. It carries out the reaction uroporphyrinogen III + 4 H(+) = coproporphyrinogen III + 4 CO2. Its pathway is porphyrin-containing compound metabolism; protoporphyrin-IX biosynthesis; coproporphyrinogen-III from 5-aminolevulinate: step 4/4. Catalyzes the decarboxylation of four acetate groups of uroporphyrinogen-III to yield coproporphyrinogen-III. This Yersinia enterocolitica serotype O:8 / biotype 1B (strain NCTC 13174 / 8081) protein is Uroporphyrinogen decarboxylase.